The following is a 152-amino-acid chain: Deoxyuridine 5'-triphosphate nucleotidohydrolase (152 aa).

Residues Arg-71–Gly-73, Asn-84, Leu-88–Asp-90, and Met-98 each bind substrate.

Belongs to the dUTPase family. Requires Mg(2+) as cofactor.

The catalysed reaction is dUTP + H2O = dUMP + diphosphate + H(+). It participates in pyrimidine metabolism; dUMP biosynthesis; dUMP from dCTP (dUTP route): step 2/2. Its function is as follows. This enzyme is involved in nucleotide metabolism: it produces dUMP, the immediate precursor of thymidine nucleotides and it decreases the intracellular concentration of dUTP so that uracil cannot be incorporated into DNA. The sequence is that of Deoxyuridine 5'-triphosphate nucleotidohydrolase from Shewanella putrefaciens (strain CN-32 / ATCC BAA-453).